Consider the following 92-residue polypeptide: PqqA binding protein (92 aa).

This sequence belongs to the PqqD family. In terms of assembly, monomer. Interacts with PqqE.

The protein operates within cofactor biosynthesis; pyrroloquinoline quinone biosynthesis. Functionally, functions as a PqqA binding protein and presents PqqA to PqqE, in the pyrroloquinoline quinone (PQQ) biosynthetic pathway. This Pseudomonas aeruginosa (strain UCBPP-PA14) protein is PqqA binding protein.